Reading from the N-terminus, the 730-residue chain is Catalase-peroxidase 1 (730 aa).

The segment at 1-24 is disordered; sequence MQEKGKCPVTGMTKHKTSGGTTNQ. Positions 95 to 218 form a cross-link, tryptophyl-tyrosyl-methioninium (Trp-Tyr) (with M-244); the sequence is WHSAGTYRMG…LAAVQMGLIY (124 aa). H96 acts as the Proton acceptor in catalysis. The tryptophyl-tyrosyl-methioninium (Tyr-Met) (with W-95) cross-link spans 218-244; it reads YVNPEGPNGQPSALASGKDIRDTFARM. Residue H259 coordinates heme b.

The protein belongs to the peroxidase family. Peroxidase/catalase subfamily. Homodimer or homotetramer. Heme b is required as a cofactor. In terms of processing, formation of the three residue Trp-Tyr-Met cross-link is important for the catalase, but not the peroxidase activity of the enzyme.

It catalyses the reaction H2O2 + AH2 = A + 2 H2O. It carries out the reaction 2 H2O2 = O2 + 2 H2O. In terms of biological role, bifunctional enzyme with both catalase and broad-spectrum peroxidase activity. This chain is Catalase-peroxidase 1, found in Alkaliphilus metalliredigens (strain QYMF).